We begin with the raw amino-acid sequence, 90 residues long: Antitoxin VapB35 (90 aa).

The interval 53–90 (GSVQPARVHGPAPRPTIPMRGGLDSGTLLERMRAEERY) is disordered.

This sequence belongs to the phD/YefM antitoxin family.

Antitoxin component of a type II toxin-antitoxin (TA) system. Neutralizes the effect of cognate toxin VapC35. This Mycobacterium tuberculosis (strain CDC 1551 / Oshkosh) protein is Antitoxin VapB35 (vapB35).